The chain runs to 481 residues: MLKWIKGGISAVTGMAEPEYGKDYIHSVADRVKNKQPYRETSREDFFWQAPDHTNVESVIFYFSDLKTGIFGFAQVIHSNIIGLHTASQFTFRIFDSKNPEDLNIWTSTKLENFYIEGPNFYADNLSVELSEDGESYHIQSSVCDLSVVDLHIRRLTPGAKIGDDPATYYGNNINEPWGSMRHVFWPRNACHGTIKVKKEVIPESDEEESSADEDDNEDEDEESGDSEEESGSEEESDSEEVEITYEDRTITFKEEDPAISTFIMAFQGMKPHHAAKAWNFMFFHSEKYSAVLMEFTTPKSYANTKISAGIITDDKEVLAMTTNNLVEHLNSEIDSVGWKVPKDIKITFKGINTKVKDEQLESENGTEQALQGEDEKEDEKEDEEEEEYKNVAEENKICAVVEGPLNNLVERIDVMGEIPSFVKNIVSGVAGTKPFIYQYADPKSSTLQINGGEKIHGVAWTEVTFISESDVISEESYNEA.

The interval 1-18 (MLKWIKGGISAVTGMAEP) is peripherally associates with membranes. Disordered regions lie at residues 197 to 251 (VKKE…DRTI) and 358 to 389 (DEQL…EEEY). Composition is skewed to acidic residues over residues 203 to 245 (PESD…VEIT) and 373 to 388 (GEDE…EEEE).

The protein belongs to the SVF1 family. Acetylated at the N-terminus in a NatC complex-dependent manner, which is required for membrane targeting.

The protein localises to the golgi apparatus. It localises to the cis-Golgi network membrane. The protein resides in the endoplasmic reticulum membrane. It is found in the cytoplasm. Its subcellular location is the nucleus. In terms of biological role, ceramide-binding protein that may transfer ceramides from the endoplasmic reticulum membrane to the cis-Golgi network membrane, and is thereby required for the biosynthesis of complex sphingolipids. Required for survival in response to oxidative stress. Involved in the diauxic shift. In Saccharomyces cerevisiae (strain ATCC 204508 / S288c) (Baker's yeast), this protein is Ceramide-binding protein SVF1 (SVF1).